Reading from the N-terminus, the 587-residue chain is uncharacterized protein (587 aa).

The N-terminal stretch at methionine 1–alanine 21 is a signal peptide. Residues leucine 22–arginine 541 lie on the Lumenal side of the membrane. N-linked (GlcNAc...) asparagine glycosylation occurs at asparagine 25. Residues glycine 44–phenylalanine 108 are disordered. The span at arginine 63–aspartate 90 shows a compositional bias: basic and acidic residues. A compositionally biased stretch (polar residues) spans alanine 91–phenylalanine 108. Residues asparagine 163–methionine 331 enclose the SUN domain. 5 N-linked (GlcNAc...) asparagine glycosylation sites follow: asparagine 378, asparagine 381, asparagine 408, asparagine 448, and asparagine 486. The chain crosses the membrane as a helical span at residues isoleucine 542–glutamate 562. At leucine 563–arginine 587 the chain is on the cytoplasmic side.

This sequence belongs to the SLP1 family. As to quaternary structure, interacts with EMP65.

The protein resides in the endoplasmic reticulum membrane. Functionally, may be involved in membrane protein folding. Required for localization of MPS3 to the nuclear envelope. This is an uncharacterized protein from Saccharomyces cerevisiae (strain ATCC 204508 / S288c) (Baker's yeast).